Consider the following 193-residue polypeptide: Transmembrane protein 066L (193 aa).

A run of 2 helical transmembrane segments spans residues 14 to 34 (VLFATLLVGSALVFPVGGLVW) and 48 to 68 (LVVEQHPHVGFALQLLALVVV).

Belongs to the IIV-6 357R family.

The protein localises to the membrane. This Invertebrate iridescent virus 3 (IIV-3) protein is Transmembrane protein 066L.